The primary structure comprises 157 residues: Small ribosomal subunit protein uS7c (157 aa).

This sequence belongs to the universal ribosomal protein uS7 family. Part of the 30S ribosomal subunit.

Its subcellular location is the plastid. It localises to the organellar chromatophore. Functionally, one of the primary rRNA binding proteins, it binds directly to 16S rRNA where it nucleates assembly of the head domain of the 30S subunit. This is Small ribosomal subunit protein uS7c (rps7) from Paulinella chromatophora.